The primary structure comprises 446 residues: Tubulin beta-6 chain (446 aa).

Positions 1–4 (MREI) match the MREI motif motif. 6 residues coordinate GTP: Gln-11, Glu-69, Ser-138, Gly-142, Thr-143, and Gly-144. Residue Glu-69 participates in Mg(2+) binding. Residue Ser-172 is modified to Phosphoserine; by CDK1. Residues Asn-204 and Asn-226 each coordinate GTP. Glu-438 carries the post-translational modification 5-glutamyl polyglutamate.

Belongs to the tubulin family. Dimer of alpha and beta chains. A typical microtubule is a hollow water-filled tube with an outer diameter of 25 nm and an inner diameter of 15 nM. Alpha-beta heterodimers associate head-to-tail to form protofilaments running lengthwise along the microtubule wall with the beta-tubulin subunit facing the microtubule plus end conferring a structural polarity. Microtubules usually have 13 protofilaments but different protofilament numbers can be found in some organisms and specialized cells. Requires Mg(2+) as cofactor. Post-translationally, some glutamate residues at the C-terminus are polyglutamylated, resulting in polyglutamate chains on the gamma-carboxyl group. Polyglutamylation plays a key role in microtubule severing by spastin (SPAST). SPAST preferentially recognizes and acts on microtubules decorated with short polyglutamate tails: severing activity by SPAST increases as the number of glutamates per tubulin rises from one to eight, but decreases beyond this glutamylation threshold. Glutamylation is also involved in cilia motility. Some glutamate residues at the C-terminus are monoglycylated but not polyglycylated due to the absence of functional TTLL10 in human. Monoglycylation is mainly limited to tubulin incorporated into cilia and flagella axonemes, which is required for their stability and maintenance. Flagella glycylation controls sperm motility. Both polyglutamylation and monoglycylation can coexist on the same protein on adjacent residues, and lowering glycylation levels increases polyglutamylation, and reciprocally. In terms of processing, phosphorylated on Ser-172 by CDK1 during the cell cycle, from metaphase to telophase, but not in interphase. This phosphorylation inhibits tubulin incorporation into microtubules. In terms of tissue distribution, ubiquitous. Maximal expression in breast and lung, where it represents around 10% of all beta-tubulins. Largely decreased expression in most cancerous tissues.

It localises to the cytoplasm. It is found in the cytoskeleton. Functionally, tubulin is the major constituent of microtubules, a cylinder consisting of laterally associated linear protofilaments composed of alpha- and beta-tubulin heterodimers. Microtubules grow by the addition of GTP-tubulin dimers to the microtubule end, where a stabilizing cap forms. Below the cap, tubulin dimers are in GDP-bound state, owing to GTPase activity of alpha-tubulin. This Homo sapiens (Human) protein is Tubulin beta-6 chain (TUBB6).